The chain runs to 1209 residues: DNA-directed RNA polymerase subunit beta' (1209 aa).

Cys60, Cys62, Cys75, and Cys78 together coordinate Zn(2+). Residues Asp450, Asp452, and Asp454 each contribute to the Mg(2+) site. The Zn(2+) site is built by Cys819, Cys893, Cys900, and Cys903.

Belongs to the RNA polymerase beta' chain family. As to quaternary structure, the RNAP catalytic core consists of 2 alpha, 1 beta, 1 beta' and 1 omega subunit. When a sigma factor is associated with the core the holoenzyme is formed, which can initiate transcription. Requires Mg(2+) as cofactor. Zn(2+) is required as a cofactor.

It carries out the reaction RNA(n) + a ribonucleoside 5'-triphosphate = RNA(n+1) + diphosphate. DNA-dependent RNA polymerase catalyzes the transcription of DNA into RNA using the four ribonucleoside triphosphates as substrates. The chain is DNA-directed RNA polymerase subunit beta' from Streptococcus mutans serotype c (strain ATCC 700610 / UA159).